A 255-amino-acid polypeptide reads, in one-letter code: CD320 antigen (255 aa).

Positions 1-29 (MNGWVARGLARRAAALGLGLRVLLCFGLC) are cleaved as a signal peptide. At 30-203 (LEIAPTPIQT…SVQSGNRNVY (174 aa)) the chain is on the extracellular side. LDL-receptor class A domains are found at residues 52–89 (SCPP…EECG) and 120–157 (SCPE…LGCG). 6 disulfides stabilise this stretch: Cys-53–Cys-66, Cys-60–Cys-79, Cys-73–Cys-88, Cys-121–Cys-134, Cys-128–Cys-147, and Cys-141–Cys-156. Residues Trp-71, Asp-74, Asp-76, Asp-78, Asp-84, and Glu-85 each coordinate Ca(2+). Ca(2+) is bound by residues Trp-139, Asp-142, His-144, Asp-146, Asp-152, and Glu-153. N-linked (GlcNAc...) asparagine glycosylation is found at Asn-177 and Asn-183. Residues 204 to 224 (GIIAAVAVLSISLAAGILFAL) form a helical membrane-spanning segment. Over 225 to 255 (SRLCAQGCLAPLGLLVSMKGSLQPEKKTSVL) the chain is Cytoplasmic.

Interacts (via LDL-receptor class A domains) with TCN2.

Its subcellular location is the cell membrane. Receptor for transcobalamin saturated with cobalamin (TCbl). Plays an important role in cobalamin uptake. Plasma membrane protein that is expressed on follicular dendritic cells (FDC) and mediates interaction with germinal center B cells. Functions as a costimulator to promote B cell responses to antigenic stimuli; promotes B cell differentiation and proliferation. Germinal center-B (GC-B) cells differentiate into memory B-cells and plasma cells (PC) through interaction with T-cells and follicular dendritic cells (FDC). CD320 augments the proliferation of PC precursors generated by IL-10. This chain is CD320 antigen (CD320), found in Bos taurus (Bovine).